Here is a 323-residue protein sequence, read N- to C-terminus: Beta-ketoacyl-[acyl-carrier-protein] synthase III (323 aa).

Active-site residues include cysteine 113 and histidine 250. Positions 251–255 (QANLR) are ACP-binding. Asparagine 280 is a catalytic residue.

Belongs to the thiolase-like superfamily. FabH family. Homodimer.

The protein resides in the cytoplasm. It catalyses the reaction malonyl-[ACP] + acetyl-CoA + H(+) = 3-oxobutanoyl-[ACP] + CO2 + CoA. It participates in lipid metabolism; fatty acid biosynthesis. Functionally, catalyzes the condensation reaction of fatty acid synthesis by the addition to an acyl acceptor of two carbons from malonyl-ACP. Catalyzes the first condensation reaction which initiates fatty acid synthesis and may therefore play a role in governing the total rate of fatty acid production. Possesses both acetoacetyl-ACP synthase and acetyl transacylase activities. Its substrate specificity determines the biosynthesis of branched-chain and/or straight-chain of fatty acids. In Paracoccus denitrificans (strain Pd 1222), this protein is Beta-ketoacyl-[acyl-carrier-protein] synthase III.